The chain runs to 278 residues: Large ribosomal subunit protein uL24m (278 aa).

The KOW domain occupies 109–142 (FFPGDLVQVMVGKDKGRQGLVLTTSRDSSDVIVD).

Belongs to the universal ribosomal protein uL24 family.

The protein localises to the mitochondrion. The chain is Large ribosomal subunit protein uL24m (mrpl-24) from Caenorhabditis elegans.